Reading from the N-terminus, the 250-residue chain is DNA polymerase sliding clamp (250 aa).

The protein belongs to the PCNA family. As to quaternary structure, homotrimer. The subunits circularize to form a toroid; DNA passes through its center. Replication factor C (RFC) is required to load the toroid on the DNA.

Sliding clamp subunit that acts as a moving platform for DNA processing. Responsible for tethering the catalytic subunit of DNA polymerase and other proteins to DNA during high-speed replication. The sequence is that of DNA polymerase sliding clamp from Methanococcus maripaludis (strain DSM 14266 / JCM 13030 / NBRC 101832 / S2 / LL).